We begin with the raw amino-acid sequence, 328 residues long: 4-hydroxythreonine-4-phosphate dehydrogenase (328 aa).

His134 and Thr135 together coordinate substrate. A divalent metal cation is bound by residues His164, His209, and His265. Substrate is bound by residues Lys273, Asn282, and Arg291.

It belongs to the PdxA family. As to quaternary structure, homodimer. Zn(2+) is required as a cofactor. Mg(2+) serves as cofactor. The cofactor is Co(2+).

The protein resides in the cytoplasm. The catalysed reaction is 4-(phosphooxy)-L-threonine + NAD(+) = 3-amino-2-oxopropyl phosphate + CO2 + NADH. The protein operates within cofactor biosynthesis; pyridoxine 5'-phosphate biosynthesis; pyridoxine 5'-phosphate from D-erythrose 4-phosphate: step 4/5. Functionally, catalyzes the NAD(P)-dependent oxidation of 4-(phosphooxy)-L-threonine (HTP) into 2-amino-3-oxo-4-(phosphooxy)butyric acid which spontaneously decarboxylates to form 3-amino-2-oxopropyl phosphate (AHAP). The polypeptide is 4-hydroxythreonine-4-phosphate dehydrogenase (Vibrio vulnificus (strain CMCP6)).